The sequence spans 456 residues: UDP-N-acetylmuramate--L-alanine ligase (456 aa).

ATP is bound at residue 117 to 123 (GTHGKTT).

The protein belongs to the MurCDEF family.

Its subcellular location is the cytoplasm. The enzyme catalyses UDP-N-acetyl-alpha-D-muramate + L-alanine + ATP = UDP-N-acetyl-alpha-D-muramoyl-L-alanine + ADP + phosphate + H(+). It functions in the pathway cell wall biogenesis; peptidoglycan biosynthesis. Its function is as follows. Cell wall formation. The sequence is that of UDP-N-acetylmuramate--L-alanine ligase from Clostridium tetani (strain Massachusetts / E88).